The primary structure comprises 449 residues: Phosphoglucosamine mutase (449 aa).

The Phosphoserine intermediate role is filled by serine 102. Mg(2+) contacts are provided by serine 102, aspartate 241, aspartate 243, and aspartate 245. Serine 102 carries the post-translational modification Phosphoserine.

This sequence belongs to the phosphohexose mutase family. Mg(2+) serves as cofactor. Activated by phosphorylation.

The enzyme catalyses alpha-D-glucosamine 1-phosphate = D-glucosamine 6-phosphate. In terms of biological role, catalyzes the conversion of glucosamine-6-phosphate to glucosamine-1-phosphate. The polypeptide is Phosphoglucosamine mutase (Pseudoalteromonas translucida (strain TAC 125)).